The following is a 277-amino-acid chain: Large ribosomal subunit protein uL2 (277 aa).

Disordered regions lie at residues 1–20 and 210–277; these read MAVK…TTAD and GRSR…RGGK. The segment covering 210 to 221 has biased composition (basic residues); the sequence is GRSRWLGRKPHQ.

It belongs to the universal ribosomal protein uL2 family. In terms of assembly, part of the 50S ribosomal subunit. Forms a bridge to the 30S subunit in the 70S ribosome.

Its function is as follows. One of the primary rRNA binding proteins. Required for association of the 30S and 50S subunits to form the 70S ribosome, for tRNA binding and peptide bond formation. It has been suggested to have peptidyltransferase activity; this is somewhat controversial. Makes several contacts with the 16S rRNA in the 70S ribosome. This is Large ribosomal subunit protein uL2 from Deinococcus deserti (strain DSM 17065 / CIP 109153 / LMG 22923 / VCD115).